We begin with the raw amino-acid sequence, 356 residues long: Uroporphyrinogen decarboxylase (356 aa).

Substrate is bound by residues 27–31 (RQAGR), D77, Y154, T209, and H327.

It belongs to the uroporphyrinogen decarboxylase family. In terms of assembly, homodimer.

It is found in the cytoplasm. The catalysed reaction is uroporphyrinogen III + 4 H(+) = coproporphyrinogen III + 4 CO2. It functions in the pathway porphyrin-containing compound metabolism; protoporphyrin-IX biosynthesis; coproporphyrinogen-III from 5-aminolevulinate: step 4/4. Functionally, catalyzes the decarboxylation of four acetate groups of uroporphyrinogen-III to yield coproporphyrinogen-III. The polypeptide is Uroporphyrinogen decarboxylase (Hahella chejuensis (strain KCTC 2396)).